We begin with the raw amino-acid sequence, 221 residues long: NAD(P)H-hydrate epimerase (221 aa).

One can recognise a YjeF N-terminal domain in the interval 10–210 (MQQIDNYTIE…DVGMLIPDDF (201 aa)). 58–62 (NNGAD) contributes to the (6S)-NADPHX binding site. Residues Asn-59 and Asp-120 each contribute to the K(+) site. Residues 124–130 (GVGLNNV) and Asp-153 contribute to the (6S)-NADPHX site. Residue Thr-156 coordinates K(+).

The protein belongs to the NnrE/AIBP family. K(+) is required as a cofactor.

It catalyses the reaction (6R)-NADHX = (6S)-NADHX. It carries out the reaction (6R)-NADPHX = (6S)-NADPHX. Its function is as follows. Catalyzes the epimerization of the S- and R-forms of NAD(P)HX, a damaged form of NAD(P)H that is a result of enzymatic or heat-dependent hydration. This is a prerequisite for the S-specific NAD(P)H-hydrate dehydratase to allow the repair of both epimers of NAD(P)HX. The sequence is that of NAD(P)H-hydrate epimerase from Leuconostoc mesenteroides subsp. mesenteroides (strain ATCC 8293 / DSM 20343 / BCRC 11652 / CCM 1803 / JCM 6124 / NCDO 523 / NBRC 100496 / NCIMB 8023 / NCTC 12954 / NRRL B-1118 / 37Y).